A 115-amino-acid polypeptide reads, in one-letter code: Cholecystokinin (115 aa).

The signal sequence occupies residues 1–20 (MNSGVCLCVLMAVLAAGALT). Positions 21–44 (QPVPPADPAGSGLQRAEEAPRRQL) are excised as a propeptide. The interval 23–52 (VPPADPAGSGLQRAEEAPRRQLRVSQRTDG) is disordered. Residue S31 is glycosylated (O-linked (Xyl...) (chondroitin sulfate) serine). A Sulfotyrosine modification is found at Y97. F103 carries the post-translational modification Phenylalanine amide. The propeptide occupies 107-115 (SAEEYEYPS). 2 positions are modified to sulfotyrosine: Y111 and Y113.

This sequence belongs to the gastrin/cholecystokinin family. Binds to CCK-A receptors in the pancreas and CCK-B receptors in the brain. Post-translationally, the precursor is cleaved by proteases to produce a number of active cholecystokinins. The precursor is cleaved by ACE, which removes the Gly-Arg-Arg peptide at the C-terminus, leading to mature hormone. Detected in cerebrospinal fluid and urine (at protein level).

It is found in the secreted. Functionally, this peptide hormone induces gall bladder contraction and the release of pancreatic enzymes in the gut. Its function in the brain is not clear. Binding to CCK-A receptors stimulates amylase release from the pancreas, binding to CCK-B receptors stimulates gastric acid secretion. The chain is Cholecystokinin (CCK) from Homo sapiens (Human).